The chain runs to 315 residues: Cytochrome c biogenesis protein CcsA (315 aa).

A run of 7 helical transmembrane segments spans residues 14-34 (VVSL…ISFW), 72-92 (ISNL…AQLF), 101-121 (IVSA…SFVL), 146-166 (VIMC…GVFL), 221-241 (SITA…VWAN), 255-272 (TWAL…HTRL), and 282-302 (AILA…VNLL).

It belongs to the CcmF/CycK/Ccl1/NrfE/CcsA family. In terms of assembly, may interact with ccs1.

The protein localises to the cellular thylakoid membrane. Functionally, required during biogenesis of c-type cytochromes (cytochrome c6 and cytochrome f) at the step of heme attachment. This Prochlorococcus marinus (strain NATL1A) protein is Cytochrome c biogenesis protein CcsA.